A 123-amino-acid polypeptide reads, in one-letter code: Secreted LysM effector Lys1 (123 aa).

Residues 1 to 20 form the signal peptide; sequence MMGLAKTLLLASQLTAVVVA. The LysM domain occupies 72–118; sequence KFCWVQAGNKCYQVAMENHISLADFLKWNPGAGSDCRTLWANTYACV.

This sequence belongs to the secreted LysM effector family.

In terms of biological role, might have a role in sequestration of chitin oligosaccharides (breakdown products of fungal cell walls that are released during invasion and act as triggers of host immunity) to dampen host defense. This is Secreted LysM effector Lys1 from Pochonia chlamydosporia (strain 123) (Metacordyceps chlamydosporia).